A 91-amino-acid polypeptide reads, in one-letter code: Probable Fe(2+)-trafficking protein (91 aa).

It belongs to the Fe(2+)-trafficking protein family. In terms of assembly, monomer.

In terms of biological role, could be a mediator in iron transactions between iron acquisition and iron-requiring processes, such as synthesis and/or repair of Fe-S clusters in biosynthetic enzymes. The chain is Probable Fe(2+)-trafficking protein from Salmonella agona (strain SL483).